Here is a 571-residue protein sequence, read N- to C-terminus: Glutamate--tRNA ligase (571 aa).

The 'HIGH' region motif lies at 110-120; that stretch reads PNPNGPATLGS.

This sequence belongs to the class-I aminoacyl-tRNA synthetase family. Glutamate--tRNA ligase type 2 subfamily.

It is found in the cytoplasm. The catalysed reaction is tRNA(Glu) + L-glutamate + ATP = L-glutamyl-tRNA(Glu) + AMP + diphosphate. Functionally, catalyzes the attachment of glutamate to tRNA(Glu) in a two-step reaction: glutamate is first activated by ATP to form Glu-AMP and then transferred to the acceptor end of tRNA(Glu). The protein is Glutamate--tRNA ligase of Methanosarcina mazei (strain ATCC BAA-159 / DSM 3647 / Goe1 / Go1 / JCM 11833 / OCM 88) (Methanosarcina frisia).